A 232-amino-acid chain; its full sequence is Cytochrome c oxidase subunit 2 (232 aa).

The Mitochondrial intermembrane portion of the chain corresponds to 1-30; it reads MNNFFQDFNLLFSSSLFSSYMDWFYNFNCS. The helical transmembrane segment at 31–52 threads the bilayer; sequence LLFGVLSFVSTMFVYLLLSSFY. Over 53-69 the chain is Mitochondrial matrix; sequence FKSKKIEYQFGELLCSV. Residues 70-89 traverse the membrane as a helical segment; the sequence is FPTLILVMQMVPSLSLLYYY. Over 90 to 232 the chain is Mitochondrial intermembrane; it reads GLMNLDSSLT…KSWCVGLLSD (143 aa). 6 residues coordinate Cu cation: histidine 164, cysteine 199, glutamate 201, cysteine 203, histidine 207, and methionine 210. Glutamate 201 is a binding site for Mg(2+).

This sequence belongs to the cytochrome c oxidase subunit 2 family. As to quaternary structure, component of the cytochrome c oxidase (complex IV, CIV), a multisubunit enzyme composed of a catalytic core of 3 subunits and several supernumerary subunits. The complex exists as a monomer or a dimer and forms supercomplexes (SCs) in the inner mitochondrial membrane with ubiquinol-cytochrome c oxidoreductase (cytochrome b-c1 complex, complex III, CIII). Requires Cu cation as cofactor.

It localises to the mitochondrion inner membrane. It carries out the reaction 4 Fe(II)-[cytochrome c] + O2 + 8 H(+)(in) = 4 Fe(III)-[cytochrome c] + 2 H2O + 4 H(+)(out). Its function is as follows. Component of the cytochrome c oxidase, the last enzyme in the mitochondrial electron transport chain which drives oxidative phosphorylation. The respiratory chain contains 3 multisubunit complexes succinate dehydrogenase (complex II, CII), ubiquinol-cytochrome c oxidoreductase (cytochrome b-c1 complex, complex III, CIII) and cytochrome c oxidase (complex IV, CIV), that cooperate to transfer electrons derived from NADH and succinate to molecular oxygen, creating an electrochemical gradient over the inner membrane that drives transmembrane transport and the ATP synthase. Cytochrome c oxidase is the component of the respiratory chain that catalyzes the reduction of oxygen to water. Electrons originating from reduced cytochrome c in the intermembrane space (IMS) are transferred via the dinuclear copper A center (CU(A)) of subunit 2 and heme A of subunit 1 to the active site in subunit 1, a binuclear center (BNC) formed by heme A3 and copper B (CU(B)). The BNC reduces molecular oxygen to 2 water molecules using 4 electrons from cytochrome c in the IMS and 4 protons from the mitochondrial matrix. This Ascaris suum (Pig roundworm) protein is Cytochrome c oxidase subunit 2 (COII).